We begin with the raw amino-acid sequence, 465 residues long: Argininosuccinate lyase (465 aa).

This sequence belongs to the lyase 1 family. Argininosuccinate lyase subfamily.

The protein localises to the cytoplasm. It catalyses the reaction 2-(N(omega)-L-arginino)succinate = fumarate + L-arginine. It functions in the pathway amino-acid biosynthesis; L-arginine biosynthesis; L-arginine from L-ornithine and carbamoyl phosphate: step 3/3. This is Argininosuccinate lyase from Methanosphaera stadtmanae (strain ATCC 43021 / DSM 3091 / JCM 11832 / MCB-3).